We begin with the raw amino-acid sequence, 530 residues long: Autoinducer-2 kinase (530 aa).

The protein belongs to the FGGY kinase family.

The protein resides in the cytoplasm. The catalysed reaction is (S)-4,5-dihydroxypentane-2,3-dione + ATP = (2S)-2-hydroxy-3,4-dioxopentyl phosphate + ADP + H(+). Functionally, catalyzes the phosphorylation of autoinducer-2 (AI-2) to phospho-AI-2, which subsequently inactivates the transcriptional regulator LsrR and leads to the transcription of the lsr operon. Phosphorylates the ring-open form of (S)-4,5-dihydroxypentane-2,3-dione (DPD), which is the precursor to all AI-2 signaling molecules, at the C5 position. The sequence is that of Autoinducer-2 kinase from Escherichia coli (strain SMS-3-5 / SECEC).